A 356-amino-acid polypeptide reads, in one-letter code: MGLCQSEEEKVGTLKSRAIDKEIKQLQTSEERTVKLLLLGAGECGKSTVLKQMRLLTSKQYTDEELLTQAKLVYTNIVIEMDHLVKAMPAAGLNFSDPMREHDVHMLTLYIKDMQHKNFQQDAADHVEKLWKDPVVKRLYAERKELNIRDIGDNTEYFFENLPRISKEDYHPNATDTLLLRTKTTGIVEVGFEIKKVKFRVFDVGGQRSERKKWIHCFEDVNAIIFIAALSEYNEVLFEDETTNRMIESMRLFESICNSRWFHNTNIILFLNKKDLFEEKIKKENIHKAFPEYRGEQNYAETVAFIKTKFEALSNNPKKTFYVHETCATDTNQVQKILDSVISMIIQSNLHKSGLY.

The N-myristoyl glycine moiety is linked to residue G2. C4 carries S-palmitoyl cysteine lipidation. In terms of domain architecture, G-alpha spans 32 to 356 (RTVKLLLLGA…QSNLHKSGLY (325 aa)). Residues 35–48 (KLLLLGAGECGKST) are G1 motif. 13 residues coordinate GTP: E43, G45, K46, S47, T48, D153, L178, T184, G206, N272, K273, D275, and A328. Mg(2+) is bound at residue S47. Residues 176–184 (DTLLLRTKT) are G2 motif. T184 contacts Mg(2+). The tract at residues 199–208 (FRVFDVGGQR) is G3 motif. Positions 268–275 (ILFLNKKD) are G4 motif. A G5 motif region spans residues 326 to 331 (TCATDT).

This sequence belongs to the G-alpha family. G(q) subfamily. In terms of assembly, g proteins are composed of 3 units; alpha, beta and gamma. The alpha chain contains the guanine nucleotide binding site. Requires Mg(2+) as cofactor.

Guanine nucleotide-binding proteins (G proteins) are involved as modulators or transducers in various transmembrane signaling systems. Involved in behavioral responses to P.aeruginosa by controlling the expression of daf-7, a member of the TGF-beta family, in ASJ sensory neurons. The polypeptide is Guanine nucleotide-binding protein alpha-2 subunit (gpa-2) (Caenorhabditis elegans).